The chain runs to 1116 residues: ELKS/Rab6-interacting/CAST family member 1 (1116 aa).

The segment at 1 to 54 (MYGSARSVGKVEPSSQSPGRSPRLPRSPRLGHRRTNSTGGSSGSSVGGGSGKTL) is disordered. Lysine 10 carries the N6-acetyllysine modification. A compositionally biased stretch (low complexity) spans 13–28 (PSSQSPGRSPRLPRSP). Phosphoserine occurs at positions 17, 21, and 37. A Phosphothreonine modification is found at threonine 38. Positions 40–51 (GSSGSSVGGGSG) are enriched in gly residues. A phosphoserine mark is found at serine 55, serine 75, and serine 94. Positions 144-988 (RQARDNTIMD…RMKLMADNYE (845 aa)) form a coiled coil. The span at 590 to 602 (KEKQMSSLKERVK) shows a compositional bias: basic and acidic residues. 2 disordered regions span residues 590-609 (KEKQMSSLKERVKSLQADTT) and 814-836 (ARRREDNLNDSSQQLQDSLRKKD). At serine 1005 the chain carries Phosphoserine. Residue threonine 1046 is modified to Phosphothreonine. Residues 1046–1108 (TPPASYNLDD…DHCPDILEQV (63 aa)) enclose the FIP-RBD domain. Residues 1060–1100 (WENELQKMTRGQLQDELEKGERDNAELQEFANAILQQIADH) are a coiled coil.

In terms of assembly, part of a complex with CHUK, IKBKB and IKBKG. Interacts with CHUK, IKBKB and IKBKG. The interaction with IKBKG is independent of CHUK and IKBKB. Interacts with NFKBIA. Isoform 4 interacts with PPFIA1, and through its C-terminus with the PDZ domains of RIMS1 and RIMS2. Interacts with ERC2/CAST1. Interacts with the GTB-bound forms of RAB6A isoform 1 and isoform 2 and with RAB6B. The interaction was strongest with RAB6B, followed by RAB6A isoform 2 and weakest with RAB6A isoform 1. Interacts with SDCCAG8. Part of a cortical microtubule stabilization complex (CMSC) composed of KANK1, PPFIA1, PPFIBP1, ERC1/ELKS, PHLDB2/LL5beta, CLASPs, KIF21A and possibly additional interactors; within CMSCs KANK1 and PHLDB2/LL5beta appear to be the core components for targeting of microtubule-binding proteins KIF21A and CLASPs, whereas PPFIA1, PPFIBP1 and ERC1/ELKS serve as scaffolds for protein clustering. As to expression, widely expressed. Isoform 2 and isoform 4 are abundantly expressed in brain. Isoform 1 and isoform 3 are predominantly expressed in testis and thyroid, and isoform 1 predominates in other tissues tested.

Its subcellular location is the cytoplasm. The protein localises to the cytoskeleton. The protein resides in the microtubule organizing center. It localises to the centrosome. It is found in the membrane. Its subcellular location is the golgi apparatus membrane. The protein localises to the presynaptic cell membrane. The protein resides in the cell projection. It localises to the podosome. In terms of biological role, regulatory subunit of the IKK complex. Probably recruits IkappaBalpha/NFKBIA to the complex. May be involved in the organization of the cytomatrix at the nerve terminals active zone (CAZ) which regulates neurotransmitter release. May be involved in vesicle trafficking at the CAZ. May be involved in Rab-6 regulated endosomes to Golgi transport. This is ELKS/Rab6-interacting/CAST family member 1 (ERC1) from Homo sapiens (Human).